The sequence spans 306 residues: Abnormal cell migration protein 21 (306 aa).

2 consecutive TSP type-1 domains span residues 55 to 102 (PGGW…AISS) and 109 to 155 (FGSW…DECP). 2 C-linked (Man) tryptophan glycosylation sites follow: Trp58 and Trp61. Cystine bridges form between Cys121/Cys149, Cys123/Cys154, and Cys134/Cys139. Residues 240-260 (CLPLHFAIPIFCFCILTGFLL) form a helical membrane-spanning segment.

Glycosylated via C-mannosylation by dpy-19 at Trp-58 and Trp-61.

The protein resides in the membrane. Required for determination of left/right asymmetry in nervous system. Acts together with unc-40 to control an initial left-right asymmetric polarization of the Q neuroblasts. Mig-21 and unc-40 may control the asymmetry in Wnt signaling response by restricting posterior polarization to one of the 2 Q neuroblasts. Involved in left-side QL posterior migration. In right-side QR, unc-40 and mig-21 pathways mutually inhibit each other in posterior migration, allowing anterior QR migration. The chain is Abnormal cell migration protein 21 (mig-21) from Caenorhabditis elegans.